The sequence spans 28 residues: Toxin a (28 aa).

The LCN-type CS-alpha/beta domain maps to 3–28 (VPGNYPLDSYGNCYPCTILGDNQYCI).

The protein belongs to the long (3 C-C) scorpion toxin superfamily. As to expression, expressed by the venom gland.

The protein resides in the secreted. Functionally, binds to sodium channels (Nav) and affects the channel activation process. This is Toxin a from Androctonus crassicauda (Arabian fat-tailed scorpion).